The following is a 283-amino-acid chain: uncharacterized protein (283 aa).

The first 21 residues, 1-21 (MKLKLKFLLISLLGSSLLLSA), serve as a signal peptide directing secretion. Cys22 carries N-palmitoyl cysteine lipidation. Cys22 is lipidated: S-diacylglycerol cysteine.

It belongs to the MG439/MG440 family.

Its subcellular location is the cell membrane. This is an uncharacterized protein from Mycoplasma pneumoniae (strain ATCC 29342 / M129 / Subtype 1) (Mycoplasmoides pneumoniae).